Here is a 439-residue protein sequence, read N- to C-terminus: Glucose-1-phosphate adenylyltransferase (439 aa).

Alpha-D-glucose 1-phosphate-binding positions include Y122, G187, 202-203 (EK), and S220.

The protein belongs to the bacterial/plant glucose-1-phosphate adenylyltransferase family. Homotetramer.

It catalyses the reaction alpha-D-glucose 1-phosphate + ATP + H(+) = ADP-alpha-D-glucose + diphosphate. It participates in glycan biosynthesis; glycogen biosynthesis. Involved in the biosynthesis of ADP-glucose, a building block required for the elongation reactions to produce glycogen. Catalyzes the reaction between ATP and alpha-D-glucose 1-phosphate (G1P) to produce pyrophosphate and ADP-Glc. This chain is Glucose-1-phosphate adenylyltransferase, found in Thiobacillus denitrificans (strain ATCC 25259 / T1).